The primary structure comprises 142 residues: Large ribosomal subunit protein uL13 (142 aa).

The protein belongs to the universal ribosomal protein uL13 family. In terms of assembly, part of the 50S ribosomal subunit.

Functionally, this protein is one of the early assembly proteins of the 50S ribosomal subunit, although it is not seen to bind rRNA by itself. It is important during the early stages of 50S assembly. The polypeptide is Large ribosomal subunit protein uL13 (Saccharophagus degradans (strain 2-40 / ATCC 43961 / DSM 17024)).